A 248-amino-acid polypeptide reads, in one-letter code: Triosephosphate isomerase (248 aa).

N11 and K13 together coordinate substrate. The active-site Electrophile is H95. E165 functions as the Proton acceptor in the catalytic mechanism.

It belongs to the triosephosphate isomerase family. Homodimer.

The protein localises to the cytoplasm. It carries out the reaction dihydroxyacetone phosphate = methylglyoxal + phosphate. The catalysed reaction is D-glyceraldehyde 3-phosphate = dihydroxyacetone phosphate. It participates in carbohydrate degradation; glycolysis; D-glyceraldehyde 3-phosphate from glycerone phosphate: step 1/1. Its pathway is carbohydrate biosynthesis; gluconeogenesis. In terms of biological role, triosephosphate isomerase is an extremely efficient metabolic enzyme that catalyzes the interconversion between dihydroxyacetone phosphate (DHAP) and D-glyceraldehyde-3-phosphate (G3P) in glycolysis and gluconeogenesis. It is also responsible for the non-negligible production of methylglyoxal a reactive cytotoxic side-product that modifies and can alter proteins, DNA and lipids. The chain is Triosephosphate isomerase (tpi1) from Xenopus laevis (African clawed frog).